Reading from the N-terminus, the 535-residue chain is Sucrose transport protein SUT5 (535 aa).

At 1 to 53 (MEEGRRGDREGKSAAGWTALSTTKTTLEEKRRLQANGSVGGDAGTSGFRRIVR) the chain is on the cytoplasmic side. The chain crosses the membrane as a helical span at residues 54-74 (LFFACMVAGGIQYGWALQLSL). Residues 75-87 (LSPYSQTLGISHS) are Extracellular-facing. The helical transmembrane segment at 88-108 (YVSLTWICGPIAGFVVQPIVG) threads the bilayer. Residues 109–122 (YYSDRCTMKMGRRR) lie on the Cytoplasmic side of the membrane. The helical transmembrane segment at 123 to 143 (PFILVGCLIICISVMIIGFSA) threads the bilayer. Residues 144–163 (DIGRHLGDTKEHCSTYTGPR) lie on the Extracellular side of the membrane. Residues 164–184 (WSAAMVYIVGFWFLDFANNTV) traverse the membrane as a helical segment. The Cytoplasmic segment spans residues 185 to 203 (QGPARAMMADLSAGHHGPN). A helical transmembrane segment spans residues 204–224 (VGQSIFSLWMAIGSVLGYLSG). Residues 225–249 (ANGKWHEWFPWLKTAACCDACANLK) lie on the Extracellular side of the membrane. The helical transmembrane segment at 250-270 (GAFFTAVLLIVVSMTVTMYLA) threads the bilayer. Residues 271 to 302 (DEMPLDKQDVDTSGGGGCAVFVDLFKSLRNLP) are Cytoplasmic-facing. A helical transmembrane segment spans residues 303–323 (PAMFKVLAVTAVTWLSWFPFI). Topologically, residues 324 to 354 (QYNTDWMGREIYHGEPQGTAAKADVYDAGVR) are extracellular. The helical transmembrane segment at 355-375 (EGAMGLLFCSVALGVTSFVIP) threads the bilayer. The Cytoplasmic segment spans residues 376 to 384 (KLCRRLTSK). A helical membrane pass occupies residues 385–405 (VVWSISNFLVFALMAVMVAVG). The Extracellular portion of the chain corresponds to 406-429 (MVSMRGYRPSLAAGLTGPDPTLKA). The chain crosses the membrane as a helical span at residues 430–450 (VALVVFALIGIPQAVLFSVPW). The Cytoplasmic portion of the chain corresponds to 451 to 465 (AVASEVTAEEGGGQG). The chain crosses the membrane as a helical span at residues 466 to 486 (LAIGVLNIAIVVPQLVIALTA). Residues 487 to 498 (GPIDGAFNKGNT) lie on the Extracellular side of the membrane. Residues 499 to 519 (PAFGIGGAFAFICGVLALIWL) traverse the membrane as a helical segment. Residues 520–535 (PKTRGVSNAAVVAGGH) are Cytoplasmic-facing.

It belongs to the glycoside-pentoside-hexuronide (GPH) cation symporter transporter (TC 2.A.2.4) family. In terms of assembly, homodimer. As to expression, widely expressed. Highest expression in sink leaves and lowest in germinating seeds.

It is found in the cell membrane. It participates in glycan biosynthesis; sucrose metabolism. Its function is as follows. Responsible for the transport of sucrose into the cell, with the concomitant uptake of protons (symport system). Can also transport other glucosides such as maltose, arbutin, salicin, helicin, alpha-phenylglucoside and beta-phenylglucoside. This is Sucrose transport protein SUT5 (SUT5) from Oryza sativa subsp. japonica (Rice).